We begin with the raw amino-acid sequence, 127 residues long: Small ribosomal subunit protein uS8m (127 aa).

This sequence belongs to the universal ribosomal protein uS8 family.

Its subcellular location is the mitochondrion. The sequence is that of Small ribosomal subunit protein uS8m (RPS8) from Acanthamoeba castellanii (Amoeba).